We begin with the raw amino-acid sequence, 94 residues long: MKKYEILYIMRPNIGDEEIKKNVETINKIFYNNENKIIQSKELGLKDLAYCIDKHYKGYYVSMFLNAMPQMIEEFNRVVKINEDIIRSIVIKEE.

This sequence belongs to the bacterial ribosomal protein bS6 family.

Its function is as follows. Binds together with bS18 to 16S ribosomal RNA. This Phytoplasma mali (strain AT) protein is Small ribosomal subunit protein bS6.